A 615-amino-acid chain; its full sequence is MAFNFNWSPLTADAGFYERARDLLTTALNKSPKPPIIVDDIFVTELNLGSVPPDLEILEIGDLAEDRFRGIFKMCYSGDAFLTLATRVQANPLNTYISAKPSFTSPEPLTASSSLTIPLQITLSEIKLSAFIILVFSKQKGLTIVFRNDPLESLKVSSTFDSIQFVRDYLQKTIEMKLRDLIMDELPAIIHRLSLQLWCPDQVPKEDEEAKEESDAAINPLATPPLDAVDAHGHRLDPAEISSLSLDGGPETQSLFSQKNLEKMDALASAHRTSSLLTPNILEVVFRAWAGQSDKPDATATPASTPNLHRTSSYQGSVHTYTFSDNSSQASGHALSRPTLVSMGSATTGLSLGSGRHSKAGRKKKMRVVNLRSKTAVSEPVSEIGSTSSQAGDSHTEASTRTPMSEPVIPTTIREVPEDDLAASQSKVRFRPPTDATTSARASESSGPRAAVPSVPVTAQPSRATSSQEHVYTRQPSMFPSSPAPQTSAQEMPPSYSSRVSEKAESTASIYADAKGQQQQFQQQQQQQQQQQQQQQQQQQQQQQQQQQQQQQQQQQQWGRAGPQPDMSSVILEQAWITKIAGEIARRVYDEKNRNPAFWEDSHQHDIPPPAYEPR.

Positions 1 to 195 (MAFNFNWSPL…LPAIIHRLSL (195 aa)) constitute an SMP-LTD domain. Disordered stretches follow at residues 293 to 313 (SDKP…RTSS), 346 to 566 (ATTG…PQPD), and 596 to 615 (PAFW…YEPR). The segment covering 301–313 (TPASTPNLHRTSS) has biased composition (polar residues). Residues 346-355 (ATTGLSLGSG) are compositionally biased toward low complexity. Basic residues predominate over residues 356-367 (RHSKAGRKKKMR). Composition is skewed to polar residues over residues 384-403 (IGST…TRTP), 435-446 (DATTSARASESS), and 457-499 (VTAQ…YSSR). Over residues 517–557 (QQQQFQQQQQQQQQQQQQQQQQQQQQQQQQQQQQQQQQQQQ) the composition is skewed to low complexity. Positions 596 to 606 (PAFWEDSHQHD) are enriched in basic and acidic residues.

It belongs to the MDM34 family. Component of the ER-mitochondria encounter structure (ERMES) or MDM complex, composed of mmm-1, mdm10, mdm12 and mdm34.

It is found in the mitochondrion outer membrane. Component of the ERMES/MDM complex, which serves as a molecular tether to connect the endoplasmic reticulum (ER) and mitochondria. Components of this complex are involved in the control of mitochondrial shape and protein biogenesis, and function in nonvesicular lipid trafficking between the ER and mitochondria. Mdm34 is required for the interaction of the ER-resident membrane protein mmm-1 and the outer mitochondrial membrane-resident beta-barrel protein mdm10. The polypeptide is Mitochondrial distribution and morphology protein 34 (Neurospora crassa (strain ATCC 24698 / 74-OR23-1A / CBS 708.71 / DSM 1257 / FGSC 987)).